A 423-amino-acid chain; its full sequence is Serine--tRNA ligase 2 (423 aa).

231–233 (TAE) provides a ligand contact to L-serine. 262–264 (RSE) contacts ATP. L-serine is bound at residue E285. 349–352 (EISS) contacts ATP. An L-serine-binding site is contributed by S384.

Belongs to the class-II aminoacyl-tRNA synthetase family. Type-1 seryl-tRNA synthetase subfamily. Homodimer. The tRNA molecule binds across the dimer.

Its subcellular location is the cytoplasm. It catalyses the reaction tRNA(Ser) + L-serine + ATP = L-seryl-tRNA(Ser) + AMP + diphosphate + H(+). It carries out the reaction tRNA(Sec) + L-serine + ATP = L-seryl-tRNA(Sec) + AMP + diphosphate + H(+). It functions in the pathway aminoacyl-tRNA biosynthesis; selenocysteinyl-tRNA(Sec) biosynthesis; L-seryl-tRNA(Sec) from L-serine and tRNA(Sec): step 1/1. Its function is as follows. Catalyzes the attachment of serine to tRNA(Ser). Is also able to aminoacylate tRNA(Sec) with serine, to form the misacylated tRNA L-seryl-tRNA(Sec), which will be further converted into selenocysteinyl-tRNA(Sec). The chain is Serine--tRNA ligase 2 from Enterococcus faecalis (strain ATCC 700802 / V583).